A 214-amino-acid chain; its full sequence is Thiopurine S-methyltransferase (214 aa).

Residues W10, L44, E65, and R122 each coordinate S-adenosyl-L-methionine.

Belongs to the class I-like SAM-binding methyltransferase superfamily. TPMT family.

Its subcellular location is the cytoplasm. The enzyme catalyses S-adenosyl-L-methionine + a thiopurine = S-adenosyl-L-homocysteine + a thiopurine S-methylether.. The chain is Thiopurine S-methyltransferase from Teredinibacter turnerae (strain ATCC 39867 / T7901).